Here is a 362-residue protein sequence, read N- to C-terminus: Serine/threonine-protein kinase SRK2E (362 aa).

Phosphoserine; by autocatalysis is present on residues serine 7, serine 18, serine 29, and serine 43. Positions 21 to 277 (YELVKDIGSG…IPEIRNHEWF (257 aa)) constitute a Protein kinase domain. ATP is bound at residue 27 to 35 (IGSGNFGVA). Lysine 50 contacts ATP. The active-site Proton acceptor is the aspartate 140. The tract at residues 160–186 (DFGYSKSSVLHSQPKSTVGTPAYIAPE) is activation loop. Serine 175 is subject to Phosphoserine. The interval 283-318 (ADLMNDNTMTTQFDESDQPGQSIEEIMQIIAEATVP) is domain I; osmotic stress response, required for the kinase activity. The domain II; ABA response and ABI1 binding stretch occupies residues 319–362 (PAGTQNLNHYLTGSLDIDDDMEEDLESDLDDLDIDSSGEIVYAM).

The protein belongs to the protein kinase superfamily. Ser/Thr protein kinase family. As to quaternary structure, interacts with ABI1, PP2CA and SLAC1. Interacts with B'ALPHA, B'BETA, B'DELTA, PP2AA2, PP2AA3, PP2A1 and PP2A2. Associates with MAPKKK18 within the nucleus. Interacts with I-2, TOPP1 and TOPP2. Interacts with ABI2. Autophosphorylation on residues Ser-7, Ser-18, Ser-29, Ser-43, Ser-175 and/or Thr-176. Only the phosphorylation of Ser-175 is crucial for the kinase activity. The phosphorylation of Ser-43 may repress the ABA signaling pathway in absence of ABA. In terms of tissue distribution, expressed in seedlings, leaves, flowers, stems, and roots, but restricted to guard cells and vascular tissue.

It localises to the nucleus. It carries out the reaction L-seryl-[protein] + ATP = O-phospho-L-seryl-[protein] + ADP + H(+). The enzyme catalyses L-threonyl-[protein] + ATP = O-phospho-L-threonyl-[protein] + ADP + H(+). With respect to regulation, kinase activity enhanced by ABA and low humidity. Repressed by PP2CA independently of its phosphatase activity. Probably inactivated by ABI1. Repressed by TOPP1. Negatively regulated by ABI2. Its function is as follows. Activator of the abscisic acid (ABA) signaling pathway that regulates numerous ABA responses, such as stomata closure in response to drought, darkness, high CO(2), plant pathogens, or decreases in atmospheric relative humidity (RH). Involved in the resistance to drought by avoiding water loss. Required for the stomata closure mediated by pathogen-associated molecular pattern (PAMPs) (e.g. flg22 and LPS) of pathogenic bacteria such as P.syringae pv. tomato (Pst) and E.coli O157:H7. As a plant defense process, stomata are closed transiently in order to limit invaders, but actively reopened by bacteria after a few hours; virulent strains (e.g. Pst DC3000) are more efficient than avirulent strains (e.g. Pst DC3000 AvrRpt2) in reopening stomata. Mediates the phosphorylation and activation of the S-type anion efflux channel SLAC1, and thus promotes stomata closure. Essential for stomatal closure in response to reactive oxygen species (ROS). Promotes MAPKKK18 activity upon abscisic acid (ABA) treatment. The sequence is that of Serine/threonine-protein kinase SRK2E from Arabidopsis thaliana (Mouse-ear cress).